The following is a 319-amino-acid chain: Transcription factor jun-1 (319 aa).

2 disordered regions span residues 1–52 and 216–264; these read MEED…EKES and NGVN…CRQK. Low complexity predominate over residues 8-19; that stretch reads PPSSSTSSESPE. Positions 28–38 are enriched in basic residues; the sequence is PTRRRKNSKKD. The basic motif stretch occupies residues 244 to 285; the sequence is KKKLERKRARNRQAATKCRQKKMDRIKELEEQVLHEKHRGQR. In terms of domain architecture, bZIP spans 244-307; that stretch reads KKKLERKRAR…EHFRRTVEHH (64 aa). A leucine-zipper region spans residues 286 to 293; that stretch reads LDAELLEL.

It belongs to the bZIP family. Jun subfamily. Heterodimer; with fos-1. In terms of tissue distribution, isoform a, isoform b, isoform c and isoform d are expressed in the spermatheca.

Its subcellular location is the nucleus. Transcription factor that recognizes and binds to the AP-1 non-canonical enhancer heptamer motif 5'-TTAGTCA-3'. Required for ovulation. Controls plc-1 expression in the spermatheca to regulate spermathecal valve dilation. This chain is Transcription factor jun-1, found in Caenorhabditis elegans.